The primary structure comprises 259 residues: MPPTELEKKRGEYNQIAIDAQKQHAPTDEKREAKRKQLMDRVGGDWQALDPDHHDAIKVAMDDAMRKILSEEEIVHRTKHFGDLLDSGRLKSLFEVGFSAGGDTPTERALLEDAWFGAGKVPPIYSAIEFNGAPTAGLGMYGGTKLYMKDSVKDRVTVTIGDSLMSSWDVFPGRPGDGVGLWASLSKIEGLVDPSKTREENMQAVYDSFKKYGTLDGFIEAQIHGGVLVEDIKKVVFTQPPSPIFTDKLDELGIPWEVQ.

2 stretches are compositionally biased toward basic and acidic residues: residues 1-12 (MPPTELEKKRGE) and 21-36 (QKQH…AKRK). The segment at 1 to 36 (MPPTELEKKRGEYNQIAIDAQKQHAPTDEKREAKRK) is disordered.

The chain is Gene 2 protein (2) from Mycobacterium (Mycobacteriophage L5).